Here is a 396-residue protein sequence, read N- to C-terminus: Elongation factor Tu (396 aa).

The tr-type G domain maps to lysine 10–glutamate 206. The tract at residues glycine 19 to threonine 26 is G1. Residue glycine 19 to threonine 26 participates in GTP binding. Threonine 26 serves as a coordination point for Mg(2+). The G2 stretch occupies residues glycine 60–serine 64. A G3 region spans residues aspartate 81–glycine 84. GTP-binding positions include aspartate 81–histidine 85 and asparagine 136–aspartate 139. The G4 stretch occupies residues asparagine 136–aspartate 139. The segment at serine 174–leucine 176 is G5.

It belongs to the TRAFAC class translation factor GTPase superfamily. Classic translation factor GTPase family. EF-Tu/EF-1A subfamily. In terms of assembly, monomer.

It is found in the cytoplasm. The catalysed reaction is GTP + H2O = GDP + phosphate + H(+). Its function is as follows. GTP hydrolase that promotes the GTP-dependent binding of aminoacyl-tRNA to the A-site of ribosomes during protein biosynthesis. This is Elongation factor Tu from Nitrobacter hamburgensis (strain DSM 10229 / NCIMB 13809 / X14).